The following is a 485-amino-acid chain: Palmitoyltransferase ZDHHC1 (485 aa).

A disordered region spans residues 1 to 41 (MYKMNICNKPSNKTAPEKSVWTAPAQPSGPSPELQGQRSRR). The Cytoplasmic portion of the chain corresponds to 1-52 (MYKMNICNKPSNKTAPEKSVWTAPAQPSGPSPELQGQRSRRNGWSWPPHPLQ). The mediates interaction with STING1 stretch occupies residues 1–271 (MYKMNICNKP…GHLLCFHIYL (271 aa)). A helical transmembrane segment spans residues 53–73 (IVAWLLYLFFAVIGFGILVPL). The Lumenal portion of the chain corresponds to 74 to 77 (LPHH). Residues 78-98 (WVPAGYACMGAIFAGHLVVHL) traverse the membrane as a helical segment. The Cytoplasmic segment spans residues 99–185 (TAVSIDPADA…YRLFLHSVAS (87 aa)). The DHHC domain occupies 134-184 (LHCNLCNVDVSARSKHCSACNKCVCGFDHHCKWLNNCVGERNYRLFLHSVA). Cysteine 164 functions as the S-palmitoyl cysteine intermediate in the catalytic mechanism. Residues 186–206 (ALLGVLLLVLVATYVFVEFFV) form a helical membrane-spanning segment. The Lumenal segment spans residues 207-241 (NPMRLRTNRHFEVLKNHTDVWFVFLPAAPVETQAP). A helical membrane pass occupies residues 242–262 (AILALAALLILLGLLSTALLG). Over 263–485 (HLLCFHIYLM…RGRRVRPPFS (223 aa)) the chain is Cytoplasmic. Disordered regions lie at residues 324-358 (EPPGQAGPAAVNAKHSRPASPDPTPGRRDCAGPPV) and 462-485 (LWPPRGAGADSPRWRGRRVRPPFS). Positions 475-485 (WRGRRVRPPFS) are enriched in basic residues.

It belongs to the DHHC palmitoyltransferase family. In terms of assembly, interacts with STING1; ZDHHC1 constitutively interacts with STING1 and in presence of DNA viruses activates it by promoting its cGAMP-induced oligomerization and the recruitment of downstream signaling components. As to expression, widely expressed with significant expression in heart, brain, placenta, lung, liver, kidney, testis, thymus and small intestine. Expressed at lower levels in adult pancreas and lung.

Its subcellular location is the endosome membrane. The protein resides in the endoplasmic reticulum membrane. It is found in the golgi apparatus. It catalyses the reaction L-cysteinyl-[protein] + hexadecanoyl-CoA = S-hexadecanoyl-L-cysteinyl-[protein] + CoA. Its function is as follows. Palmitoyltransferase that catalyzes the addition of palmitate onto various protein substrates, such as NCDN and NLRP3. Has a palmitoyltransferase activity toward NCDN and regulates NCDN association with endosome membranes through this palmitoylation. Acts as an activator of the NLRP3 inflammasome by mediating palmitoylation of 'Cys-130' and 'Cys-958' of NLRP3, thereby promoting NLRP3 phosphorylation and activation by NEK7. Also has a palmitoyltransferase activity-independent function in DNA virus-triggered and CGAS-mediated innate immune response. Functions as an activator of STING1 by promoting its cGAMP-induced oligomerization and the recruitment of downstream signaling components. The protein is Palmitoyltransferase ZDHHC1 of Homo sapiens (Human).